The following is a 270-amino-acid chain: 5'-AMP-activated protein kinase subunit beta-1 (270 aa).

The interval 1–43 (MGNTSSERAALERQAGHKTPRRDSSGGTKDGDRPKILMDSPED) is disordered. Residue Gly-2 is the site of N-myristoyl glycine attachment. Thr-4 is subject to Phosphothreonine. Residues Ser-5 and Ser-6 each carry the phosphoserine modification. A compositionally biased stretch (basic and acidic residues) spans 9–36 (AALERQAGHKTPRRDSSGGTKDGDRPKI). At Thr-19 the chain carries Phosphothreonine. 2 positions are modified to phosphoserine; by autocatalysis: Ser-24 and Ser-25. Phosphoserine occurs at positions 40, 96, and 101. Residues 68-163 (EVNEKAPAQA…QVKKTDFEVF (96 aa)) are glycogen-binding domain. Phosphoserine; by autocatalysis is present on Ser-108. Phosphothreonine is present on Thr-148. At Ser-182 the chain carries Phosphoserine. An N6-succinyllysine modification is found at Lys-201.

The protein belongs to the 5'-AMP-activated protein kinase beta subunit family. AMPK is a heterotrimer of an alpha catalytic subunit (PRKAA1 or PRKAA2), a beta (PRKAB1 or PRKAB2) and a gamma non-catalytic subunits (PRKAG1, PRKAG2 or PRKAG3). Interacts with FNIP1 and FNIP2. In terms of processing, phosphorylated when associated with the catalytic subunit (PRKAA1 or PRKAA2). Phosphorylated by ULK1; leading to negatively regulate AMPK activity and suggesting the existence of a regulatory feedback loop between ULK1 and AMPK. As to expression, highly expressed in kidney, heart, white adipose tissue, lung and spleen.

Non-catalytic subunit of AMP-activated protein kinase (AMPK), an energy sensor protein kinase that plays a key role in regulating cellular energy metabolism. In response to reduction of intracellular ATP levels, AMPK activates energy-producing pathways and inhibits energy-consuming processes: inhibits protein, carbohydrate and lipid biosynthesis, as well as cell growth and proliferation. AMPK acts via direct phosphorylation of metabolic enzymes, and by longer-term effects via phosphorylation of transcription regulators. Also acts as a regulator of cellular polarity by remodeling the actin cytoskeleton; probably by indirectly activating myosin. Beta non-catalytic subunit acts as a scaffold on which the AMPK complex assembles, via its C-terminus that bridges alpha (PRKAA1 or PRKAA2) and gamma subunits (PRKAG1, PRKAG2 or PRKAG3). This is 5'-AMP-activated protein kinase subunit beta-1 (Prkab1) from Rattus norvegicus (Rat).